The following is a 475-amino-acid chain: Probable 5'-adenylylsulfate reductase 1, chloroplastic (475 aa).

Residues 1–63 (MASATASISS…AAEPARQPVS (63 aa)) constitute a chloroplast transit peptide. The reductase domain stretch occupies residues 72 to 327 (AAPVAEDAAA…KAKECGLHKG (256 aa)). Positions 341–475 (HKAGGANGNG…SLLAFVNSLR (135 aa)) constitute a Thioredoxin domain. Catalysis depends on nucleophile residues Cys393 and Cys396. A disulfide bridge connects residues Cys393 and Cys396.

It belongs to the APS reductase family. The cofactor is [4Fe-4S] cluster.

Its subcellular location is the plastid. The protein resides in the chloroplast. It carries out the reaction glutathione disulfide + sulfite + AMP + 2 H(+) = adenosine 5'-phosphosulfate + 2 glutathione. Functionally, reduces sulfate for Cys biosynthesis. The chain is Probable 5'-adenylylsulfate reductase 1, chloroplastic (APR1) from Oryza sativa subsp. japonica (Rice).